The primary structure comprises 132 residues: N,N-dimethylformamidase alpha subunit (132 aa).

As to quaternary structure, heterotetramer of two DmfA1 (alpha) and two DmfA2 (beta) subunits.

The enzyme catalyses N,N-dimethylformamide + H2O = dimethylamine + formate. With respect to regulation, activity is slightly inhibited by Mg(2+) and Mn(2+), and slightly increased by Cu(2+). Activity is slightly inhibited by the chelating agents 8-hydroxyquinoline, ethylenediaminetetraacetate, o-phenanthroline and 2,2'-bipyridyl. Hydrolyzes N,N-dimethylformamide, and to a lesser extent N,N-dimethylacetamide and N,N-diethylacetamide. Has no activity against the substituted amides N-methylformamide, N-ethylformamide, N-ethylformamide and N-methylacetamide or the unsubstituted amides formamide, nicotinamide, acetoamide, benzamide, acetamide and acrylamide. The polypeptide is N,N-dimethylformamidase alpha subunit (Alcaligenes sp).